Consider the following 146-residue polypeptide: 3-dehydroquinate dehydratase (146 aa).

The active-site Proton acceptor is the tyrosine 24. The substrate site is built by asparagine 73, histidine 79, and aspartate 86. Histidine 99 (proton donor) is an active-site residue. Substrate contacts are provided by residues 100–101 and arginine 110; that span reads LS.

The protein belongs to the type-II 3-dehydroquinase family. Homododecamer.

It carries out the reaction 3-dehydroquinate = 3-dehydroshikimate + H2O. Its pathway is metabolic intermediate biosynthesis; chorismate biosynthesis; chorismate from D-erythrose 4-phosphate and phosphoenolpyruvate: step 3/7. In terms of biological role, catalyzes a trans-dehydration via an enolate intermediate. The chain is 3-dehydroquinate dehydratase from Shewanella baltica (strain OS185).